Reading from the N-terminus, the 165-residue chain is Plastocyanin, chloroplastic (165 aa).

Residues 1-66 (MATVTSSAAV…AGILAGNAMA (66 aa)) constitute a chloroplast transit peptide. The 99-residue stretch at 67 to 165 (AEVLLGSSDG…AGMVGKVTVN (99 aa)) folds into the Plastocyanin-like domain. Cu cation-binding residues include histidine 103, cysteine 150, histidine 153, and methionine 158.

This sequence belongs to the plastocyanin family. Requires Cu(2+) as cofactor.

Its subcellular location is the plastid. It localises to the chloroplast thylakoid membrane. Functionally, participates in electron transfer between P700 and the cytochrome b6-f complex in photosystem I. The chain is Plastocyanin, chloroplastic (PETE) from Silene latifolia subsp. alba (White campion).